Consider the following 382-residue polypeptide: Pyruvate dehydrogenase E1 component subunit beta, mitochondrial (382 aa).

The transit peptide at 1–46 (MSRFLRPAFRLATTATRASTIRPTPSSLITKAAAVPTTRLLQKRSY) directs the protein to the mitochondrion. Thiamine diphosphate is bound at residue Glu-112. K(+)-binding residues include Ile-165, Ala-213, Ile-214, Asp-216, and Asn-218.

Eukaryotic pyruvate dehydrogenase (PDH) complexes are organized as a core consisting of the oligomeric dihydrolipoamide acetyl-transferase (E2), around which are arranged multiple copies of pyruvate dehydrogenase (E1), dihydrolipoamide dehydrogenase (E3) and protein X (E3BP) bound by non-covalent bonds. The Chaetomium thermophilum PDH complex contains 60 E2 units, 12 E3BP units, about 20 E1 units, and 12 or more E3 units. The units are organized in 1 E2 60-mer, 4 E3BP trimers, about 20 E1 tetramers, and a maximum of 12 E3 dimers. Pyruvate dehydrogenase (E1) is active as a tetramer of 2 alpha and 2 beta subunits. The E3BP trimers are bound inside the icosahedral core with tetrahedral symmetry. Thiamine diphosphate is required as a cofactor.

It localises to the mitochondrion. It catalyses the reaction N(6)-[(R)-lipoyl]-L-lysyl-[protein] + pyruvate + H(+) = N(6)-[(R)-S(8)-acetyldihydrolipoyl]-L-lysyl-[protein] + CO2. Functionally, the 10-megadalton pyruvate dehydrogenase complex contains multiple copies of three enzymatic components: pyruvate dehydrogenase (E1), dihydrolipoamide acetyltransferase (E2) and lipoamide dehydrogenase (E3) and catalyzes the overall oxidative decarboxylation of pyruvate to form acetyl-CoA and CO(2). Within the complex, pyruvate and thiamine pyrophosphate (TPP or vitamin B1) are bound by pyruvate dehydrogenase E1 subunits alpha and beta and pyruvate is decarboxylated leading to the 2-carbon hydrohyethyl bound to TPP. The E2 component contains covalently-bound lipoyl cofactors and transfers the hydroxyethyl group from TPP to an oxidized form of covalently bound lipoamide, and the resulting acetyl group is then transferred to free coenzyme A to form acetyl-CoA and reduced dihydrolipoamide-E2. Finally, the flavoprotein dihydrolipoamide dehydrogenase (E3) re-oxidizes the lipoyl group of dihydrolipoamide-E2 to form lipoamide-E2 and NADH. A fourth subunit, E3BP, is responsible for tethering E3 in proximity to the core, forming the entire metabolon. The chain is Pyruvate dehydrogenase E1 component subunit beta, mitochondrial from Chaetomium thermophilum (strain DSM 1495 / CBS 144.50 / IMI 039719) (Thermochaetoides thermophila).